A 154-amino-acid polypeptide reads, in one-letter code: UPF0260 protein HI_1355 (154 aa).

The protein belongs to the UPF0260 family.

In Haemophilus influenzae (strain ATCC 51907 / DSM 11121 / KW20 / Rd), this protein is UPF0260 protein HI_1355.